Reading from the N-terminus, the 321-residue chain is Lipoyl synthase (321 aa).

Positions 68, 73, 79, 94, 98, 101, and 308 each coordinate [4Fe-4S] cluster. The 218-residue stretch at 80-297 folds into the Radical SAM core domain; the sequence is FNHGTATFMI…KVLADELGFT (218 aa).

The protein belongs to the radical SAM superfamily. Lipoyl synthase family. [4Fe-4S] cluster serves as cofactor.

It localises to the cytoplasm. It carries out the reaction [[Fe-S] cluster scaffold protein carrying a second [4Fe-4S](2+) cluster] + N(6)-octanoyl-L-lysyl-[protein] + 2 oxidized [2Fe-2S]-[ferredoxin] + 2 S-adenosyl-L-methionine + 4 H(+) = [[Fe-S] cluster scaffold protein] + N(6)-[(R)-dihydrolipoyl]-L-lysyl-[protein] + 4 Fe(3+) + 2 hydrogen sulfide + 2 5'-deoxyadenosine + 2 L-methionine + 2 reduced [2Fe-2S]-[ferredoxin]. It functions in the pathway protein modification; protein lipoylation via endogenous pathway; protein N(6)-(lipoyl)lysine from octanoyl-[acyl-carrier-protein]: step 2/2. In terms of biological role, catalyzes the radical-mediated insertion of two sulfur atoms into the C-6 and C-8 positions of the octanoyl moiety bound to the lipoyl domains of lipoate-dependent enzymes, thereby converting the octanoylated domains into lipoylated derivatives. The polypeptide is Lipoyl synthase (Shewanella sp. (strain MR-7)).